We begin with the raw amino-acid sequence, 159 residues long: Protein hunchback (159 aa).

Over residues 18–34 (HNHHHHHHHGHHQHQQR) the composition is skewed to basic residues. 2 disordered regions span residues 18-49 (HNHH…QSPL) and 119-159 (LTPP…KYMA). Over residues 140-159 (EPEKEHDLMSNSSEDMKYMA) the composition is skewed to basic and acidic residues.

It belongs to the hunchback C2H2-type zinc-finger protein family.

The protein localises to the nucleus. Its function is as follows. Gap class segmentation protein that controls development of head structures. The protein is Protein hunchback (hb) of Drosophila soonae (Fruit fly).